Here is a 27-residue protein sequence, read N- to C-terminus: Snake venom serine protease Afaacytin alpha/beta/beta' chains (27 aa).

Residues 1–27 enclose the Peptidase S1 domain; sequence VIGGAECNINEHRSLVLLYXSSSXFGE.

Belongs to the peptidase S1 family. Snake venom subfamily. Heterodimer of an alpha and a beta chain. Subunit beta is constituted of two disulfide-linked polypeptidic chains, beta and beta'. Calcium appears to be required for structural cohesion of the molecule. Post-translationally, both chains alpha and beta are N-glycosylated. In terms of tissue distribution, expressed by the venom gland.

Its subcellular location is the secreted. With respect to regulation, inhibited by diisopropylfluorophosphate (DFP), benzamidine, heparin and hirudin, but not by plasmatic thrombin inhibitors, antithrombin-III and ecotin. In terms of biological role, snake venom serine protease that exhibits alpha-fibrinase and beta-fibrinogenase activities. It replaces missing factors VIII (F8) and IX (F9) in deficient plasmas by activating purified human factor X (F10) into factor Xa. It releases serotonin from platelets and induces platelet aggregation in human (but not in rabbit). Has caseinolytic, arginine-esterase and amidase activities. The sequence is that of Snake venom serine protease Afaacytin alpha/beta/beta' chains from Cerastes cerastes (Horned desert viper).